Consider the following 51-residue polypeptide: uncharacterized protein (51 aa).

This sequence to E.coli YdfA.

This is an uncharacterized protein from Escherichia coli O157:H7.